Here is a 177-residue protein sequence, read N- to C-terminus: Adenine phosphoribosyltransferase (177 aa).

Belongs to the purine/pyrimidine phosphoribosyltransferase family. In terms of assembly, homodimer.

It localises to the cytoplasm. It catalyses the reaction AMP + diphosphate = 5-phospho-alpha-D-ribose 1-diphosphate + adenine. The protein operates within purine metabolism; AMP biosynthesis via salvage pathway; AMP from adenine: step 1/1. Functionally, catalyzes a salvage reaction resulting in the formation of AMP, that is energically less costly than de novo synthesis. The chain is Adenine phosphoribosyltransferase from Chlorobium luteolum (strain DSM 273 / BCRC 81028 / 2530) (Pelodictyon luteolum).